A 271-amino-acid chain; its full sequence is Formamidopyrimidine-DNA glycosylase (271 aa).

Catalysis depends on P2, which acts as the Schiff-base intermediate with DNA. The active-site Proton donor is E3. K58 (proton donor; for beta-elimination activity) is an active-site residue. H92, R111, and R152 together coordinate DNA. An FPG-type zinc finger spans residues 237 to 271 (FVYGRQQQPCKQCGSLLRQTTIRQRTTVWCGHCQG). The active-site Proton donor; for delta-elimination activity is R261.

The protein belongs to the FPG family. In terms of assembly, monomer. The cofactor is Zn(2+).

The catalysed reaction is Hydrolysis of DNA containing ring-opened 7-methylguanine residues, releasing 2,6-diamino-4-hydroxy-5-(N-methyl)formamidopyrimidine.. The enzyme catalyses 2'-deoxyribonucleotide-(2'-deoxyribose 5'-phosphate)-2'-deoxyribonucleotide-DNA = a 3'-end 2'-deoxyribonucleotide-(2,3-dehydro-2,3-deoxyribose 5'-phosphate)-DNA + a 5'-end 5'-phospho-2'-deoxyribonucleoside-DNA + H(+). Its function is as follows. Involved in base excision repair of DNA damaged by oxidation or by mutagenic agents. Acts as a DNA glycosylase that recognizes and removes damaged bases. Has a preference for oxidized purines, such as 7,8-dihydro-8-oxoguanine (8-oxoG). Has AP (apurinic/apyrimidinic) lyase activity and introduces nicks in the DNA strand. Cleaves the DNA backbone by beta-delta elimination to generate a single-strand break at the site of the removed base with both 3'- and 5'-phosphates. In Xylella fastidiosa (strain 9a5c), this protein is Formamidopyrimidine-DNA glycosylase (mutM1).